The primary structure comprises 142 residues: Large ribosomal subunit protein uL11 (142 aa).

This sequence belongs to the universal ribosomal protein uL11 family. Part of the ribosomal stalk of the 50S ribosomal subunit. Interacts with L10 and the large rRNA to form the base of the stalk. L10 forms an elongated spine to which L12 dimers bind in a sequential fashion forming a multimeric L10(L12)X complex. In terms of processing, one or more lysine residues are methylated.

Functionally, forms part of the ribosomal stalk which helps the ribosome interact with GTP-bound translation factors. The sequence is that of Large ribosomal subunit protein uL11 from Sinorhizobium medicae (strain WSM419) (Ensifer medicae).